The following is a 186-amino-acid chain: Cytochrome c oxidase polypeptide 5, mitochondrial (186 aa).

The transit peptide at 1–20 directs the protein to the mitochondrion; the sequence is MYLSKIICKKVPMKLLCTRN. At 21–107 the chain is on the mitochondrial matrix side; it reads AATVSAAATN…GPRAFSHISQ (87 aa). The helical transmembrane segment at 108–128 threads the bilayer; it reads KTVFWGTVAGLTIGVVLFGLI. Residues 129–186 are Mitochondrial intermembrane-facing; sequence RTQAAPSPRTMTREWQEKSNEYMKENKINPISGEASEGFKGRGQISGGIFSPSEKDKK. A disordered region spans residues 149–186; the sequence is EYMKENKINPISGEASEGFKGRGQISGGIFSPSEKDKK.

Belongs to the cytochrome c oxidase IV family. In terms of assembly, component of the cytochrome c oxidase (complex IV, CIV), a multisubunit enzyme composed of a catalytic core of 3 subunits and seevral supernumerary subunits. The complex exists as a monomer or a dimer and forms supercomplexes (SCs) in the inner mitochondrial membrane with ubiquinol-cytochrome c oxidoreductase (cytochrome b-c1 complex, complex III, CIII).

It localises to the mitochondrion inner membrane. It functions in the pathway energy metabolism; oxidative phosphorylation. Component of the cytochrome c oxidase, the last enzyme in the mitochondrial electron transport chain which drives oxidative phosphorylation. The respiratory chain contains 3 multisubunit complexes succinate dehydrogenase (complex II, CII), ubiquinol-cytochrome c oxidoreductase (cytochrome b-c1 complex, complex III, CIII) and cytochrome c oxidase (complex IV, CIV), that cooperate to transfer electrons derived from NADH and succinate to molecular oxygen, creating an electrochemical gradient over the inner membrane that drives transmembrane transport and the ATP synthase. Cytochrome c oxidase is the component of the respiratory chain that catalyzes the reduction of oxygen to water. Electrons originating from reduced cytochrome c in the intermembrane space (IMS) are transferred via the dinuclear copper A center (CU(A)) of subunit 2 and heme A of subunit 1 to the active site in subunit 1, a binuclear center (BNC) formed by heme A3 and copper B (CU(B)). The BNC reduces molecular oxygen to 2 water molecules using 4 electrons from cytochrome c in the IMS and 4 protons from the mitochondrial matrix. This is Cytochrome c oxidase polypeptide 5, mitochondrial (cox5) from Schizosaccharomyces pombe (strain 972 / ATCC 24843) (Fission yeast).